A 192-amino-acid polypeptide reads, in one-letter code: Putative ripening-related protein 2 (192 aa).

The signal sequence occupies residues 1–26 (MATTNCLLALAIAGLVLVSLPGLSRG).

The protein belongs to the kiwellin family.

It is found in the secreted. The chain is Putative ripening-related protein 2 from Oryza sativa subsp. japonica (Rice).